We begin with the raw amino-acid sequence, 546 residues long: Probable protein kinase UbiB (546 aa).

In terms of domain architecture, Protein kinase spans 124–502 (DFDITPLASA…RVKQGQSRYL (379 aa)). ATP contacts are provided by residues 130-138 (LASASIAQV) and K153. D288 acts as the Proton acceptor in catalysis. 2 consecutive transmembrane segments (helical) span residues 501 to 518 (YLFG…LLFI) and 523 to 542 (WGMS…LIGW).

The protein belongs to the ABC1 family. UbiB subfamily.

It localises to the cell inner membrane. Its pathway is cofactor biosynthesis; ubiquinone biosynthesis [regulation]. Is probably a protein kinase regulator of UbiI activity which is involved in aerobic coenzyme Q (ubiquinone) biosynthesis. The polypeptide is Probable protein kinase UbiB (Cronobacter sakazakii (strain ATCC BAA-894) (Enterobacter sakazakii)).